The primary structure comprises 125 residues: Small ribosomal subunit protein uS13 (125 aa).

It belongs to the universal ribosomal protein uS13 family. In terms of assembly, part of the 30S ribosomal subunit. Forms a loose heterodimer with protein S19. Forms two bridges to the 50S subunit in the 70S ribosome.

In terms of biological role, located at the top of the head of the 30S subunit, it contacts several helices of the 16S rRNA. In the 70S ribosome it contacts the 23S rRNA (bridge B1a) and protein L5 of the 50S subunit (bridge B1b), connecting the 2 subunits; these bridges are implicated in subunit movement. Contacts the tRNAs in the A and P-sites. The chain is Small ribosomal subunit protein uS13 from Orientia tsutsugamushi (strain Boryong) (Rickettsia tsutsugamushi).